Here is a 253-residue protein sequence, read N- to C-terminus: uncharacterized protein (253 aa).

Residue 7–14 (GKGGVGKT) participates in ATP binding.

This sequence to M.jannaschii MJ0084 and MJ0823.

This is an uncharacterized protein from Methanocaldococcus jannaschii (strain ATCC 43067 / DSM 2661 / JAL-1 / JCM 10045 / NBRC 100440) (Methanococcus jannaschii).